A 322-amino-acid polypeptide reads, in one-letter code: DNA primase small subunit PriS (322 aa).

Catalysis depends on residues D100, D102, and D228.

The protein belongs to the eukaryotic-type primase small subunit family. Heterodimer of a small subunit (PriS) and a large subunit (PriL). It depends on Mg(2+) as a cofactor. Mn(2+) is required as a cofactor.

Functionally, catalytic subunit of DNA primase, an RNA polymerase that catalyzes the synthesis of short RNA molecules used as primers for DNA polymerase during DNA replication. The small subunit contains the primase catalytic core and has DNA synthesis activity on its own. Binding to the large subunit stabilizes and modulates the activity, increasing the rate of DNA synthesis while decreasing the length of the DNA fragments, and conferring RNA synthesis capability. The DNA polymerase activity may enable DNA primase to also catalyze primer extension after primer synthesis. May also play a role in DNA repair. The chain is DNA primase small subunit PriS from Sulfolobus acidocaldarius (strain ATCC 33909 / DSM 639 / JCM 8929 / NBRC 15157 / NCIMB 11770).